A 101-amino-acid polypeptide reads, in one-letter code: uncharacterized protein (101 aa).

The next 2 membrane-spanning stretches (helical) occupy residues 35 to 55 (LWTM…LIII) and 66 to 86 (FLFF…TLLF).

It is found in the membrane. This is an uncharacterized protein from Saccharomyces cerevisiae (strain ATCC 204508 / S288c) (Baker's yeast).